Reading from the N-terminus, the 188-residue chain is Dual specificity protein phosphatase 18 (188 aa).

A Tyrosine-protein phosphatase domain is found at 19 to 160 (GLSQITKSLY…LIHYEFQLFG (142 aa)). Catalysis depends on Cys104, which acts as the Phosphocysteine intermediate.

This sequence belongs to the protein-tyrosine phosphatase family. Non-receptor class dual specificity subfamily. In terms of tissue distribution, widely expressed with highest levels in liver, brain, ovary and testis.

It localises to the cytoplasm. Its subcellular location is the nucleus. The protein localises to the mitochondrion inner membrane. The enzyme catalyses O-phospho-L-tyrosyl-[protein] + H2O = L-tyrosyl-[protein] + phosphate. It catalyses the reaction O-phospho-L-seryl-[protein] + H2O = L-seryl-[protein] + phosphate. It carries out the reaction O-phospho-L-threonyl-[protein] + H2O = L-threonyl-[protein] + phosphate. Activated by manganese ions, inhibited by iodoacetic acid. Can dephosphorylate single and diphosphorylated synthetic MAPK peptides, with preference for the phosphotyrosine and diphosphorylated forms over phosphothreonine. In vitro, dephosphorylates p-nitrophenyl phosphate (pNPP). This Homo sapiens (Human) protein is Dual specificity protein phosphatase 18 (DUSP18).